Reading from the N-terminus, the 236-residue chain is Purine nucleoside phosphorylase DeoD-type 2 (236 aa).

A purine D-ribonucleoside is bound at residue His5. Phosphate-binding positions include Gly21, Arg25, Arg44, and 88–91 (RIGS). A purine D-ribonucleoside is bound by residues 180-182 (DME) and 204-205 (SD). The active-site Proton donor is the Asp205.

The protein belongs to the PNP/UDP phosphorylase family. In terms of assembly, homohexamer; trimer of homodimers.

It carries out the reaction a purine D-ribonucleoside + phosphate = a purine nucleobase + alpha-D-ribose 1-phosphate. The enzyme catalyses a purine 2'-deoxy-D-ribonucleoside + phosphate = a purine nucleobase + 2-deoxy-alpha-D-ribose 1-phosphate. Functionally, catalyzes the reversible phosphorolytic breakdown of the N-glycosidic bond in the beta-(deoxy)ribonucleoside molecules, with the formation of the corresponding free purine bases and pentose-1-phosphate. The chain is Purine nucleoside phosphorylase DeoD-type 2 from Vibrio cholerae serotype O1 (strain ATCC 39315 / El Tor Inaba N16961).